The sequence spans 503 residues: Cytochrome P450 3A13 (503 aa).

Cys442 contacts heme.

It belongs to the cytochrome P450 family. It depends on heme as a cofactor.

It is found in the endoplasmic reticulum membrane. The protein localises to the microsome membrane. It catalyses the reaction an organic molecule + reduced [NADPH--hemoprotein reductase] + O2 = an alcohol + oxidized [NADPH--hemoprotein reductase] + H2O + H(+). In terms of biological role, can activate aflatoxin B1 to a genotoxic product. The protein is Cytochrome P450 3A13 (Cyp3a13) of Mus musculus (Mouse).